The sequence spans 456 residues: Cysteine--tRNA ligase (456 aa).

Cys-30 provides a ligand contact to Zn(2+). Positions 32 to 42 (MTVYDFCHIGH) match the 'HIGH' region motif. The Zn(2+) site is built by Cys-211, His-236, and Glu-240. The short motif at 268–272 (KMSKS) is the 'KMSKS' region element. Lys-271 provides a ligand contact to ATP.

Belongs to the class-I aminoacyl-tRNA synthetase family. As to quaternary structure, monomer. Requires Zn(2+) as cofactor.

The protein localises to the cytoplasm. It carries out the reaction tRNA(Cys) + L-cysteine + ATP = L-cysteinyl-tRNA(Cys) + AMP + diphosphate. The sequence is that of Cysteine--tRNA ligase from Dichelobacter nodosus (strain VCS1703A).